Here is a 375-residue protein sequence, read N- to C-terminus: Antichymotrypsin-2 (375 aa).

It belongs to the serpin family. In terms of tissue distribution, hemolymph.

It is found in the secreted. This Bombyx mori (Silk moth) protein is Antichymotrypsin-2.